The sequence spans 247 residues: Pyridoxine 5'-phosphate synthase (247 aa).

Asn-9 is a 3-amino-2-oxopropyl phosphate binding site. 11-12 (DH) serves as a coordination point for 1-deoxy-D-xylulose 5-phosphate. Arg-20 provides a ligand contact to 3-amino-2-oxopropyl phosphate. His-45 (proton acceptor) is an active-site residue. 1-deoxy-D-xylulose 5-phosphate is bound by residues Arg-47 and His-52. Glu-72 serves as the catalytic Proton acceptor. Thr-102 lines the 1-deoxy-D-xylulose 5-phosphate pocket. The active-site Proton donor is the His-193. 3-amino-2-oxopropyl phosphate is bound by residues Gly-194 and 215–216 (GH).

Belongs to the PNP synthase family. Homooctamer; tetramer of dimers.

The protein resides in the cytoplasm. The catalysed reaction is 3-amino-2-oxopropyl phosphate + 1-deoxy-D-xylulose 5-phosphate = pyridoxine 5'-phosphate + phosphate + 2 H2O + H(+). The protein operates within cofactor biosynthesis; pyridoxine 5'-phosphate biosynthesis; pyridoxine 5'-phosphate from D-erythrose 4-phosphate: step 5/5. In terms of biological role, catalyzes the complicated ring closure reaction between the two acyclic compounds 1-deoxy-D-xylulose-5-phosphate (DXP) and 3-amino-2-oxopropyl phosphate (1-amino-acetone-3-phosphate or AAP) to form pyridoxine 5'-phosphate (PNP) and inorganic phosphate. This Blochmanniella floridana protein is Pyridoxine 5'-phosphate synthase.